We begin with the raw amino-acid sequence, 325 residues long: ATP-dependent (S)-NAD(P)H-hydrate dehydratase (325 aa).

One can recognise a YjeF C-terminal domain in the interval 9-315 (LLKKVYNMVP…EHVHTAFLNV (307 aa)). (6S)-NADPHX contacts are provided by residues Gly119 and 172–178 (NVVEFGR). Residues 211 to 215 (KGAKD) and 230 to 239 (GGLKRSGGQG) each bind ATP. Residue Asp240 coordinates (6S)-NADPHX.

Belongs to the NnrD/CARKD family. The cofactor is Mg(2+).

The protein resides in the cytoplasm. It catalyses the reaction (6S)-NADHX + ATP = ADP + phosphate + NADH + H(+). The catalysed reaction is (6S)-NADPHX + ATP = ADP + phosphate + NADPH + H(+). Catalyzes the dehydration of the S-form of NAD(P)HX at the expense of ATP, which is converted to ADP. Together with NAD(P)HX epimerase, which catalyzes the epimerization of the S- and R-forms, the enzyme allows the repair of both epimers of NAD(P)HX, a damaged form of NAD(P)H that is a result of enzymatic or heat-dependent hydration. The chain is ATP-dependent (S)-NAD(P)H-hydrate dehydratase from Phaeosphaeria nodorum (strain SN15 / ATCC MYA-4574 / FGSC 10173) (Glume blotch fungus).